Reading from the N-terminus, the 127-residue chain is Classical arabinogalactan protein 10 (127 aa).

Residues 1-21 form the signal peptide; it reads MASKSVVVLLFLALIASSAIA. Gln-22 bears the Pyrrolidone carboxylic acid mark. The disordered stretch occupies residues 22 to 107; sequence QAPGPAPTRS…TGSTPVDNNN (86 aa). 4-hydroxyproline occurs at positions 24, 26, 28, 32, and 36. O-linked (Ara...) hydroxyproline glycans are attached at residues Pro-24, Pro-26, Pro-28, Pro-32, and Pro-36. Pro residues-rich tracts occupy residues 25 to 39, 48 to 58, and 66 to 86; these read GPAP…PAQP, SITPTPTPTPS, and VSPP…PPTS. A compositionally biased stretch (polar residues) spans 98 to 107; that stretch reads TGSTPVDNNN. Asn-107 carries GPI-anchor amidated asparagine lipidation. Residues 108 to 127 constitute a propeptide, removed in mature form; that stretch reads AATLAAGSLAGFVFVASLLL.

The protein belongs to the classical AGP family. In terms of processing, O-glycosylated on hydroxyprolines; noncontiguous hydroxylproline residues are glycosylated with arabinogalactan. Predominantly expressed in flowers and at a lower level in roots and siliques.

It is found in the cell membrane. In terms of biological role, proteoglycan that seems to be implicated in diverse developmental roles such as differentiation, cell-cell recognition, embryogenesis and programmed cell death. The polypeptide is Classical arabinogalactan protein 10 (AGP10) (Arabidopsis thaliana (Mouse-ear cress)).